The chain runs to 202 residues: Complement component C8 gamma chain (202 aa).

The signal sequence occupies residues 1–20 (MLPPGTATLLTLLLAAGSLG). Glutamine 21 is modified (pyrrolidone carboxylic acid). Cysteine 96 and cysteine 188 form a disulfide bridge.

The protein belongs to the calycin superfamily. Lipocalin family. In terms of assembly, heterotrimer of 3 chains: alpha (C8A), beta (C8B) and gamma (C8G); the alpha and gamma chains are disulfide bonded. Component of the membrane attack complex (MAC), composed of complement C5b, C6, C7, C8A, C8B, C8G and multiple copies of the pore-forming subunit C9.

It is found in the secreted. The protein resides in the target cell membrane. Membrane attack complex (MAC) assembly is inhibited by CD59, thereby protecting self-cells from damage during complement activation. MAC assembly is also inhibited by clusterin (CLU) chaperones that inhibit polymerization of C9. In terms of biological role, component of the membrane attack complex (MAC), a multiprotein complex activated by the complement cascade, which inserts into a target cell membrane and forms a pore, leading to target cell membrane rupture and cell lysis. The MAC is initiated by proteolytic cleavage of C5 into complement C5b in response to the classical, alternative, lectin and GZMK complement pathways. The complement pathways consist in a cascade of proteins that leads to phagocytosis and breakdown of pathogens and signaling that strengthens the adaptive immune system. C8G, together with C8A and C8B, inserts into the target membrane, but does not form pores by itself. During MAC assembly, associates with C5b, C6 and C7 to form the C5b8 intermediate complex that inserts into the target membrane and traverses the bilayer increasing membrane rigidity. The chain is Complement component C8 gamma chain from Homo sapiens (Human).